Consider the following 167-residue polypeptide: Ribosome maturation factor RimM (167 aa).

The 73-residue stretch at T94–F166 folds into the PRC barrel domain.

It belongs to the RimM family. As to quaternary structure, binds ribosomal protein uS19.

It is found in the cytoplasm. Its function is as follows. An accessory protein needed during the final step in the assembly of 30S ribosomal subunit, possibly for assembly of the head region. Essential for efficient processing of 16S rRNA. May be needed both before and after RbfA during the maturation of 16S rRNA. It has affinity for free ribosomal 30S subunits but not for 70S ribosomes. The protein is Ribosome maturation factor RimM of Chlorobium phaeobacteroides (strain DSM 266 / SMG 266 / 2430).